The following is a 305-amino-acid chain: MWNLRITPLSFGAACQGIFTSTLLLSCVTVPLVCTIVYDSCLYMDINASRALANVYDLPDDFFPKIDDLVRDAKDALEPYWKSDSIKKHVLIATHFVDLIEDFWQTTQGMHEIAESLRAVIPPTTTPVPPGYLIQHEEAEEIPLGDLFKHQEERIVSFQPDYPITARIHAHLKAYAKINEESLDRARRLLWWHYNCLLWGEAQVTNYISRLRTWLSTPEKYRGRDAPTIEAITRPIQVAQGGRKTTTGTRKPRGLEPRRRKVKTTVVYGRRRSKSRERRAPTPQRAGSPLPRSSSSHHRSPSPRK.

An N-terminal signal peptide occupies residues 1 to 19 (MWNLRITPLSFGAACQGIF). The tract at residues 226–305 (APTIEAITRP…SHHRSPSPRK (80 aa)) is disordered. Basic residues-rich tracts occupy residues 258-277 (RRRK…KSRE) and 295-305 (SSHHRSPSPRK). A propeptide spanning residues 273-305 (SKSRERRAPTPQRAGSPLPRSSSSHHRSPSPRK) is cleaved from the precursor.

This sequence belongs to the avihepadnavirus precore antigen family. In terms of assembly, homodimerizes.

It is found in the secreted. Its function is as follows. May regulate immune response to the intracellular capsid in acting as a T-cell tolerogen, by having an immunoregulatory effect which prevents destruction of infected cells by cytotoxic T-cells. This chain is External core antigen (C), found in Duck hepatitis B virus (strain United States/DHBV-16) (DHBV).